We begin with the raw amino-acid sequence, 185 residues long: Ribosome-recycling factor (185 aa).

It belongs to the RRF family.

It localises to the cytoplasm. Responsible for the release of ribosomes from messenger RNA at the termination of protein biosynthesis. May increase the efficiency of translation by recycling ribosomes from one round of translation to another. The protein is Ribosome-recycling factor of Edwardsiella ictaluri (strain 93-146).